We begin with the raw amino-acid sequence, 388 residues long: MTSLFRRSSSGSGGGGATGARGAGTGAGDGSTAPQELNNSRPARQVRRLEFNQAMDDFKTMFPNMDYDIIECVLRANSGAVDATIDQLLQMNLEAGGGSAYEDSSDSEDSIPPEILERTLEPDSSEEEPPPVYSPPAYHMHVFDRPYLMAPPTPPPRIDVPGSGQPASQRRYRNWNPPLLGSLPDDFLRILPQQMDSIQGHPGGSKPMSGEGGPPPAPGPMACDQDSRWKQYLEDERIALFLQNEEFMKELQRNRDFLLALERDRLKYESQKSKSNNAAVGNDGGFPSSVPGTSETNPTVSEDALFRDKLKHMGKSTRRKLFELARAFSEKTKMRKSKKKHLPKLQSLGAAASTANLLDDVEGHAYEEDFRGRRQEVPKVEEALREGQ.

Residues 1–10 (MTSLFRRSSS) are compositionally biased toward low complexity. The disordered stretch occupies residues 1-45 (MTSLFRRSSSGSGGGGATGARGAGTGAGDGSTAPQELNNSRPARQ). Residues 11–29 (GSGGGGATGARGAGTGAGD) are compositionally biased toward gly residues. The 44-residue stretch at 50 to 93 (EFNQAMDDFKTMFPNMDYDIIECVLRANSGAVDATIDQLLQMNL) folds into the CUE domain. Disordered stretches follow at residues 152-178 (PTPP…WNPP), 196-225 (DSIQ…ACDQ), 270-302 (SQKS…TVSE), and 369-388 (DFRG…REGQ). Positions 290–300 (VPGTSETNPTV) are enriched in polar residues.

The polypeptide is CUE domain-containing protein 1 (Cuedc1) (Mus musculus (Mouse)).